The sequence spans 459 residues: tRNA uridine(34) acetyltransferase (459 aa).

A radical S-adenosyl-L-methionine (rSAM) region spans residues 1–278 (MKKLSRTISG…VPPYVRISRV (278 aa)). The Radical SAM core domain maps to 6 to 271 (RTISGVTPVA…IADIKALVPP (266 aa)). [4Fe-4S] cluster-binding residues include C23, C27, and C30. K77 contributes to the acetyl-CoA binding site. The N-acetyltransferase stretch occupies residues 308–459 (QKCRCIRCRE…VAGYMCKHLD (152 aa)). Residues C310, C312, and C315 each coordinate Zn(2+). Residues 386-389 (ELHV), 409-411 (LGR), and Y442 each bind acetyl-CoA.

This sequence belongs to the ELP3 family. In terms of assembly, homodimer. It depends on [4Fe-4S] cluster as a cofactor.

It carries out the reaction uridine(34) in tRNA + acetyl-CoA + S-adenosyl-L-methionine + H2O = 5-(carboxymethyl)uridine(34) in tRNA + 5'-deoxyadenosine + L-methionine + CoA + 2 H(+). It participates in tRNA modification. TRNA uridine(34) acetyltransferase, which mediates formation of carboxymethyluridine in the wobble base at position 34 in tRNAs. The proposed mechanism is the following: (i) recruits S-adenosyl-L-methionine and cleaves it to generate a 5'-deoxyadenosine radical (5'-dA) in the radical S-adenosyl-L-methionine (rSAM) region, (ii) hydrolyzes acetyl-CoA in the N-acetyltransferase domain and (iii) an acetyl radical is formed by the products of the two domains and (iv) is transferred onto the C5 position of uridine(34) in the bound tRNA molecule. Does not show protein lysine acetyltransferase activity. This chain is tRNA uridine(34) acetyltransferase, found in Dehalococcoides mccartyi (strain CBDB1).